The following is a 1749-amino-acid chain: Transposon Ty1-NL2 Gag-Pol polyprotein (1749 aa).

Composition is skewed to polar residues over residues 1-23 (MESQQLSQHSPISHGSACASVTS), 48-60 (TKANSQQTTTPAS), 71-97 (SPQTAQSHSPQNGPYPQQCMMTQNQAN), and 129-152 (QFPQYPSSVGTPLSTPSPESGNTF). Disordered regions lie at residues 1–97 (MESQ…NQAN), 129–171 (QFPQ…YVRP), and 352–421 (GSRN…SKST). The span at 153–165 (TDSSSADSDMTST) shows a compositional bias: low complexity. The segment at 299–401 (NNGIHINNKV…NSKSKTARAH (103 aa)) is RNA-binding. Low complexity predominate over residues 402–418 (NVSTSNNSPSTDNDSIS). Asp461 acts as the For protease activity; shared with dimeric partner in catalysis. The segment at 583–640 (NVHTSESTRKYPYPFIHRMLAHANAQTIRYSLKNNTITYFNESDVDWSSAIDYQCPDC) is integrase-type zinc finger-like. Residues 660-835 (NSYEPFQYLH…AGLDISTLLP (176 aa)) form the Integrase catalytic domain. Residues Asp671 and Asp736 each contribute to the Mg(2+) site. The interval 945 to 1166 (PRNVLSKAVS…LGGIGDSNAY (222 aa)) is disordered. Residues 954-963 (SPTDSTPPST) show a composition bias toward low complexity. Over residues 999 to 1009 (STPQISDIEST) the composition is skewed to polar residues. Residues 1032–1047 (ESSHTSKSKDFRHSDS) are compositionally biased toward basic and acidic residues. 2 stretches are compositionally biased toward polar residues: residues 1048-1076 (YSDNETNHTNVPISSTGGTNNKTVPQTSE) and 1089-1100 (SIDTSSSESNSL). The Bipartite nuclear localization signal motif lies at 1172–1206 (KKRSLEDNETEIKVSRDTWNTKNMRSLEPPRSKKR). The 139-residue stretch at 1332–1470 (NNYYITQLDI…DILGLEIKYQ (139 aa)) folds into the Reverse transcriptase Ty1/copia-type domain. 6 residues coordinate Mg(2+): Asp1340, Asp1421, Asp1422, Asp1604, Glu1646, and Asp1679. The 143-residue stretch at 1604–1746 (DASYGNQPYY…IKTFKLLTNK (143 aa)) folds into the RNase H Ty1/copia-type domain.

In terms of assembly, the capsid protein forms a homotrimer, from which the VLPs are assembled. The protease is a homodimer, whose active site consists of two apposed aspartic acid residues. Initially, virus-like particles (VLPs) are composed of the structural unprocessed proteins Gag and Gag-Pol, and also contain the host initiator methionine tRNA (tRNA(i)-Met) which serves as a primer for minus-strand DNA synthesis, and a dimer of genomic Ty RNA. Processing of the polyproteins occurs within the particle and proceeds by an ordered pathway, called maturation. First, the protease (PR) is released by autocatalytic cleavage of the Gag-Pol polyprotein yielding capsid protein p45 and a Pol-p154 precursor protein. This cleavage is a prerequisite for subsequent processing of Pol-p154 at the remaining sites to release the mature structural and catalytic proteins. Maturation takes place prior to the RT reaction and is required to produce transposition-competent VLPs.

The protein localises to the cytoplasm. It localises to the nucleus. The enzyme catalyses DNA(n) + a 2'-deoxyribonucleoside 5'-triphosphate = DNA(n+1) + diphosphate. It catalyses the reaction Endonucleolytic cleavage to 5'-phosphomonoester.. In terms of biological role, capsid protein (CA) is the structural component of the virus-like particle (VLP), forming the shell that encapsulates the retrotransposons dimeric RNA genome. The particles are assembled from trimer-clustered units and there are holes in the capsid shells that allow for the diffusion of macromolecules. CA also has nucleocapsid-like chaperone activity, promoting primer tRNA(i)-Met annealing to the multipartite primer-binding site (PBS), dimerization of Ty1 RNA and initiation of reverse transcription. Its function is as follows. The aspartyl protease (PR) mediates the proteolytic cleavages of the Gag and Gag-Pol polyproteins after assembly of the VLP. Functionally, reverse transcriptase/ribonuclease H (RT) is a multifunctional enzyme that catalyzes the conversion of the retro-elements RNA genome into dsDNA within the VLP. The enzyme displays a DNA polymerase activity that can copy either DNA or RNA templates, and a ribonuclease H (RNase H) activity that cleaves the RNA strand of RNA-DNA heteroduplexes during plus-strand synthesis and hydrolyzes RNA primers. The conversion leads to a linear dsDNA copy of the retrotransposon that includes long terminal repeats (LTRs) at both ends. Integrase (IN) targets the VLP to the nucleus, where a subparticle preintegration complex (PIC) containing at least integrase and the newly synthesized dsDNA copy of the retrotransposon must transit the nuclear membrane. Once in the nucleus, integrase performs the integration of the dsDNA into the host genome. The protein is Transposon Ty1-NL2 Gag-Pol polyprotein (TY1B-NL2) of Saccharomyces cerevisiae (strain ATCC 204508 / S288c) (Baker's yeast).